Consider the following 247-residue polypeptide: Orotidine 5'-phosphate decarboxylase (247 aa).

Substrate is bound by residues Asp-21, Lys-43, Asp-70–Thr-79, Thr-129, Arg-190, Gln-199, Gly-219, and Arg-220. Lys-72 acts as the Proton donor in catalysis.

The protein belongs to the OMP decarboxylase family. Type 1 subfamily. In terms of assembly, homodimer.

The catalysed reaction is orotidine 5'-phosphate + H(+) = UMP + CO2. Its pathway is pyrimidine metabolism; UMP biosynthesis via de novo pathway; UMP from orotate: step 2/2. Catalyzes the decarboxylation of orotidine 5'-monophosphate (OMP) to uridine 5'-monophosphate (UMP). This chain is Orotidine 5'-phosphate decarboxylase, found in Chromobacterium violaceum (strain ATCC 12472 / DSM 30191 / JCM 1249 / CCUG 213 / NBRC 12614 / NCIMB 9131 / NCTC 9757 / MK).